The following is a 463-amino-acid chain: NADH-quinone oxidoreductase subunit N (463 aa).

14 consecutive transmembrane segments (helical) span residues 5 to 25 (LLYG…LMLL), 34 to 54 (AGSA…VMQL), 72 to 92 (FSEI…VYSL), 99 to 119 (KYWI…DSAG), 120 to 140 (FISL…LMVL), 154 to 174 (YLLL…LVYG), 196 to 216 (LAAS…FPFH), 230 to 250 (VTAF…VRIL), 259 to 279 (AVTV…ITAI), 286 to 303 (KMLA…MFAL), 314 to 334 (LLYY…CFSI), 356 to 376 (AILL…PGFL), 393 to 413 (VAVL…GVVL), and 432 to 452 (LCWT…FMLL).

The protein belongs to the complex I subunit 2 family. As to quaternary structure, NDH-1 is composed of 14 different subunits. Subunits NuoA, H, J, K, L, M, N constitute the membrane sector of the complex.

It localises to the cell inner membrane. It catalyses the reaction a quinone + NADH + 5 H(+)(in) = a quinol + NAD(+) + 4 H(+)(out). Its function is as follows. NDH-1 shuttles electrons from NADH, via FMN and iron-sulfur (Fe-S) centers, to quinones in the respiratory chain. The immediate electron acceptor for the enzyme in this species is believed to be ubiquinone. Couples the redox reaction to proton translocation (for every two electrons transferred, four hydrogen ions are translocated across the cytoplasmic membrane), and thus conserves the redox energy in a proton gradient. The polypeptide is NADH-quinone oxidoreductase subunit N (Pelobacter propionicus (strain DSM 2379 / NBRC 103807 / OttBd1)).